The sequence spans 361 residues: Cysteine-rich with EGF-like domain protein 2-A (361 aa).

An N-terminal signal peptide occupies residues 1–24 (MNGSRALHLSAWLLLCLLCSAAVA). In terms of domain architecture, EGF-like 1 spans 134–176 (DCLACLGGSERPCHGNGFCNGDGTRSGDGLCRCEAEYTGPFCL). Disulfide bonds link Cys-138–Cys-152, Cys-146–Cys-164, and Cys-166–Cys-175. The N-linked (GlcNAc...) asparagine glycan is linked to Asn-188. FU repeat units follow at residues 191-238 (YSLC…EESP) and 251-298 (SFLC…SEQV). The EGF-like 2; calcium-binding domain maps to 288-329 (DVDECDASEQVCSRENETCLNTAGSYKCTCSEGFEDKEGNCV). Intrachain disulfides connect Cys-292/Cys-306, Cys-299/Cys-315, and Cys-317/Cys-328. Asn-303 is a glycosylation site (N-linked (GlcNAc...) asparagine). Positions 341-361 (DGEMGTSASDINISNTAHEDL) are disordered. Residues 346-361 (TSASDINISNTAHEDL) are compositionally biased toward polar residues. An N-linked (GlcNAc...) asparagine glycan is attached at Asn-352.

It belongs to the CRELD family.

Its subcellular location is the secreted. It is found in the endoplasmic reticulum. Its function is as follows. Possible role in neuronal acetylcholine receptor transport. The sequence is that of Cysteine-rich with EGF-like domain protein 2-A (creld2-a) from Xenopus laevis (African clawed frog).